The primary structure comprises 378 residues: Cytochrome b (378 aa).

The next 4 helical transmembrane spans lie at 33–53 (FGSL…FLAM), 77–98 (WLIR…YLHI), 113–133 (WNTG…GYVL), and 178–198 (FFAF…LHFL). The heme b site is built by His-83 and His-97. Heme b is bound by residues His-182 and His-196. His-201 serves as a coordination point for a ubiquinone. 4 helical membrane-spanning segments follow: residues 226–246 (YKDL…AVFS), 288–308 (LGGV…PFLH), 320–340 (WSQL…WIGG), and 347–367 (LTTV…FLMP).

Belongs to the cytochrome b family. The cytochrome bc1 complex contains 3 respiratory subunits (MT-CYB, CYC1 and UQCRFS1), 2 core proteins (UQCRC1 and UQCRC2) and probably 6 low-molecular weight proteins. Requires heme b as cofactor.

The protein resides in the mitochondrion inner membrane. Its function is as follows. Component of the ubiquinol-cytochrome c reductase complex (complex III or cytochrome b-c1 complex) that is part of the mitochondrial respiratory chain. The b-c1 complex mediates electron transfer from ubiquinol to cytochrome c. Contributes to the generation of a proton gradient across the mitochondrial membrane that is then used for ATP synthesis. The chain is Cytochrome b (mt-cyb) from Indostomus paradoxus (Armoured stickleback).